The sequence spans 257 residues: Transmembrane protein 101 (257 aa).

The next 8 helical transmembrane spans lie at 21–40 (VLLTRCPFWGCFSQLMLYAE), 52–72 (VPYLYFDMGAAVLCASFMSFG), 77–97 (WFALGAALQLAISTYAAYVGG), 110–130 (YSRTVAIIGGFLVLASGAGEL), 139–159 (SLQSTGQVFLGVYLVCVAYSL), 182–202 (LFFVLYGVLALAFLSGYYVTL), 206–226 (ILAVLLPPVMLLIDGNVAYWH), and 233–253 (FWNQMKLLGESVGIFGAAVIL).

The protein localises to the membrane. May activate NF-kappa-B signaling pathways. This Bos taurus (Bovine) protein is Transmembrane protein 101 (TMEM101).